Consider the following 872-residue polypeptide: Exoglucanase A (872 aa).

The first 40 residues, 1-40, serve as a signal peptide directing secretion; the sequence is MSTLGKRAGVRRRVRAVATAATATALVAVPLTTLATSASA. Residues 41-477 form a catalytic region; the sequence is APVHVDNPYA…PVIGGTTPVE (437 aa). 2 disulfides stabilise this stretch: Cys-140-Cys-202 and Cys-374-Cys-428. Residue Asp-188 is the Proton donor of the active site. Asp-410 serves as the catalytic Nucleophile. Fibronectin type-III domains are found at residues 484–569, 579–667, and 677–765; these read VPTG…TQSG, VPAG…TQTG, and VPTG…TQAA. In terms of domain architecture, CBM2 spans 763–872; that stretch reads QAATSGGCTV…TLNGVACTLG (110 aa). Residues Cys-770 and Cys-869 are joined by a disulfide bond.

It belongs to the glycosyl hydrolase 6 (cellulase B) family.

It catalyses the reaction Hydrolysis of (1-&gt;4)-beta-D-glucosidic linkages in cellulose and cellotetraose, releasing cellobiose from the non-reducing ends of the chains.. In terms of biological role, this enzyme hydrolyzes 1,4-beta-D-glucosidic linkages of cellulose. Weak activity against carboxymethylcellulose, bacterial microcrystalline cellulose and barley beta-glucan. Also has weak endoglucanase activity. Hydrolyzes glucosidic bonds with inversion of anomeric configuration. The protein is Exoglucanase A (cbhA) of Cellulomonas fimi (strain ATCC 484 / DSM 20113 / JCM 1341 / CCUG 24087 / LMG 16345 / NBRC 15513 / NCIMB 8980 / NCTC 7547 / NRS-133).